Consider the following 827-residue polypeptide: 4-hydroxy-3-methylbut-2-enyl diphosphate reductase (827 aa).

The interval 1 to 284 (MEIIRAKHMG…MNIEKKVRGI (284 aa)) is 4-hydroxy-3-methylbut-2-enyl diphosphate reductase. Residue Cys12 coordinates [4Fe-4S] cluster. 2 residues coordinate (2E)-4-hydroxy-3-methylbut-2-enyl diphosphate: His40 and His79. Residues His40 and His79 each coordinate dimethylallyl diphosphate. Isopentenyl diphosphate contacts are provided by His40 and His79. Residue Cys101 participates in [4Fe-4S] cluster binding. Position 129 (His129) interacts with (2E)-4-hydroxy-3-methylbut-2-enyl diphosphate. His129 contacts dimethylallyl diphosphate. His129 contributes to the isopentenyl diphosphate binding site. Residue Glu131 is the Proton donor of the active site. (2E)-4-hydroxy-3-methylbut-2-enyl diphosphate is bound at residue Thr168. Cys196 provides a ligand contact to [4Fe-4S] cluster. Residues Ser224, Ser225, Asn226, and Ser268 each coordinate (2E)-4-hydroxy-3-methylbut-2-enyl diphosphate. Dimethylallyl diphosphate-binding residues include Ser224, Ser225, Asn226, and Ser268. 4 residues coordinate isopentenyl diphosphate: Ser224, Ser225, Asn226, and Ser268. S1 motif domains are found at residues 477-545 (GQIV…LSIK), 562-632 (DDEI…LGIK), 649-716 (DTVI…GSLK), and 733-802 (GTTV…LSIK).

The protein in the N-terminal section; belongs to the IspH family. It depends on [4Fe-4S] cluster as a cofactor.

It carries out the reaction isopentenyl diphosphate + 2 oxidized [2Fe-2S]-[ferredoxin] + H2O = (2E)-4-hydroxy-3-methylbut-2-enyl diphosphate + 2 reduced [2Fe-2S]-[ferredoxin] + 2 H(+). The catalysed reaction is dimethylallyl diphosphate + 2 oxidized [2Fe-2S]-[ferredoxin] + H2O = (2E)-4-hydroxy-3-methylbut-2-enyl diphosphate + 2 reduced [2Fe-2S]-[ferredoxin] + 2 H(+). It functions in the pathway isoprenoid biosynthesis; dimethylallyl diphosphate biosynthesis; dimethylallyl diphosphate from (2E)-4-hydroxy-3-methylbutenyl diphosphate: step 1/1. The protein operates within isoprenoid biosynthesis; isopentenyl diphosphate biosynthesis via DXP pathway; isopentenyl diphosphate from 1-deoxy-D-xylulose 5-phosphate: step 6/6. Functionally, catalyzes the conversion of 1-hydroxy-2-methyl-2-(E)-butenyl 4-diphosphate (HMBPP) into a mixture of isopentenyl diphosphate (IPP) and dimethylallyl diphosphate (DMAPP). Acts in the terminal step of the DOXP/MEP pathway for isoprenoid precursor biosynthesis. This is 4-hydroxy-3-methylbut-2-enyl diphosphate reductase from Fusobacterium nucleatum subsp. nucleatum (strain ATCC 25586 / DSM 15643 / BCRC 10681 / CIP 101130 / JCM 8532 / KCTC 2640 / LMG 13131 / VPI 4355).